The sequence spans 391 residues: Formate-dependent phosphoribosylglycinamide formyltransferase (391 aa).

N(1)-(5-phospho-beta-D-ribosyl)glycinamide-binding positions include 18 to 19 (EL) and Glu-78. ATP contacts are provided by residues Arg-110, Lys-151, 156–161 (SSGKGQ), 191–194 (EEFI), and Glu-199. One can recognise an ATP-grasp domain in the interval 115 to 305 (DLASKDLKIK…EFELHLRAFL (191 aa)). Mg(2+) is bound by residues Glu-264 and Glu-276. Residues Asp-283, Lys-353, and 360–361 (RR) contribute to the N(1)-(5-phospho-beta-D-ribosyl)glycinamide site.

Belongs to the PurK/PurT family. In terms of assembly, homodimer.

The catalysed reaction is N(1)-(5-phospho-beta-D-ribosyl)glycinamide + formate + ATP = N(2)-formyl-N(1)-(5-phospho-beta-D-ribosyl)glycinamide + ADP + phosphate + H(+). It functions in the pathway purine metabolism; IMP biosynthesis via de novo pathway; N(2)-formyl-N(1)-(5-phospho-D-ribosyl)glycinamide from N(1)-(5-phospho-D-ribosyl)glycinamide (formate route): step 1/1. In terms of biological role, involved in the de novo purine biosynthesis. Catalyzes the transfer of formate to 5-phospho-ribosyl-glycinamide (GAR), producing 5-phospho-ribosyl-N-formylglycinamide (FGAR). Formate is provided by PurU via hydrolysis of 10-formyl-tetrahydrofolate. The protein is Formate-dependent phosphoribosylglycinamide formyltransferase of Prochlorococcus marinus (strain AS9601).